The following is a 473-amino-acid chain: ATP synthase subunit beta (473 aa).

ATP is bound at residue 158-165 (GGAGVGKT).

The protein belongs to the ATPase alpha/beta chains family. As to quaternary structure, F-type ATPases have 2 components, CF(1) - the catalytic core - and CF(0) - the membrane proton channel. CF(1) has five subunits: alpha(3), beta(3), gamma(1), delta(1), epsilon(1). CF(0) has three main subunits: a(1), b(2) and c(9-12). The alpha and beta chains form an alternating ring which encloses part of the gamma chain. CF(1) is attached to CF(0) by a central stalk formed by the gamma and epsilon chains, while a peripheral stalk is formed by the delta and b chains.

The protein resides in the cell membrane. The enzyme catalyses ATP + H2O + 4 H(+)(in) = ADP + phosphate + 5 H(+)(out). Its function is as follows. Produces ATP from ADP in the presence of a proton gradient across the membrane. The catalytic sites are hosted primarily by the beta subunits. This is ATP synthase subunit beta from Priestia megaterium (strain ATCC 12872 / QMB1551) (Bacillus megaterium).